Here is a 564-residue protein sequence, read N- to C-terminus: Dihydroxy-acid dehydratase (564 aa).

Residue Cys50 participates in [2Fe-2S] cluster binding. Residue Asp82 coordinates Mg(2+). [2Fe-2S] cluster is bound at residue Cys123. Mg(2+)-binding residues include Asp124 and Lys125. Position 125 is an N6-carboxylysine (Lys125). A [2Fe-2S] cluster-binding site is contributed by Cys195. Mg(2+) is bound at residue Glu447. The active-site Proton acceptor is the Ser473.

It belongs to the IlvD/Edd family. As to quaternary structure, homodimer. It depends on [2Fe-2S] cluster as a cofactor. The cofactor is Mg(2+).

It catalyses the reaction (2R)-2,3-dihydroxy-3-methylbutanoate = 3-methyl-2-oxobutanoate + H2O. It carries out the reaction (2R,3R)-2,3-dihydroxy-3-methylpentanoate = (S)-3-methyl-2-oxopentanoate + H2O. It functions in the pathway amino-acid biosynthesis; L-isoleucine biosynthesis; L-isoleucine from 2-oxobutanoate: step 3/4. The protein operates within amino-acid biosynthesis; L-valine biosynthesis; L-valine from pyruvate: step 3/4. Functionally, functions in the biosynthesis of branched-chain amino acids. Catalyzes the dehydration of (2R,3R)-2,3-dihydroxy-3-methylpentanoate (2,3-dihydroxy-3-methylvalerate) into 2-oxo-3-methylpentanoate (2-oxo-3-methylvalerate) and of (2R)-2,3-dihydroxy-3-methylbutanoate (2,3-dihydroxyisovalerate) into 2-oxo-3-methylbutanoate (2-oxoisovalerate), the penultimate precursor to L-isoleucine and L-valine, respectively. This chain is Dihydroxy-acid dehydratase, found in Chloroflexus aggregans (strain MD-66 / DSM 9485).